The primary structure comprises 1648 residues: AT-rich interactive domain-containing protein arid-1 (1648 aa).

Disordered regions lie at residues 150–270 (ISEA…PVIN) and 284–307 (RKLE…EEKL). 3 stretches are compositionally biased toward acidic residues: residues 166-193 (DDDE…DTEE), 219-228 (TQSEESSADS), and 251-260 (SDEEDQEDLA). A compositionally biased stretch (polar residues) spans 261–270 (TTDSENPVIN). Residues 655–745 (AETKDLFVAM…FLESYLAINT (91 aa)) form the ARID domain. 3 disordered regions span residues 763–935 (VLPG…KEDT), 1095–1563 (SEKR…KPHD), and 1628–1648 (KTAS…TPRP). Positions 848 to 860 (SDDVTDVPDDMTD) are enriched in acidic residues. Composition is skewed to basic and acidic residues over residues 861-878 (HEDL…ERKS) and 925-935 (SEGRGPRKEDT). 2 stretches are compositionally biased toward acidic residues: residues 1102-1112 (DDDESSDSDTD) and 1145-1154 (GDEEAEEEVK). The segment covering 1165–1185 (QESPPTTSQGTTTPETAATGG) has biased composition (low complexity). Residues 1195–1208 (YPPVPEELVPPPPV) show a composition bias toward pro residues. Residues 1213–1251 (FPSTDRFSSGGSSNYPTLSRQGSINSMASPMFSPNSDLS) show a composition bias toward polar residues. The segment covering 1313–1326 (RASERSIDSASEHH) has biased composition (basic and acidic residues). Over residues 1348-1357 (ISTTQPTDTS) the composition is skewed to polar residues. Residues 1377–1392 (ASPTLLTSGPLTLSSS) show a composition bias toward low complexity. Pro residues predominate over residues 1393-1404 (APPPPPASPAPP). Composition is skewed to low complexity over residues 1474-1486 (STTT…PKSI) and 1531-1541 (TPTTMTTSTPT). Residues 1542–1551 (RADSFQTQKN) are compositionally biased toward polar residues.

It localises to the nucleus. DNA-binding protein which modulates activity of several transcription factors. Plays a role in the modulation of endoplasmic reticulum (ER) homeostasis during chemical and pathogen stress, including exposure to the Gram-negative bacterium P.aeruginosa. The protein is AT-rich interactive domain-containing protein arid-1 of Caenorhabditis elegans.